A 679-amino-acid polypeptide reads, in one-letter code: Altered inheritance of mitochondria protein 21 (679 aa).

The interval 1–95 is disordered; it reads MPSEVTPKVP…EELNNVMNNT (95 aa). The span at 9–19 shows a compositional bias: basic and acidic residues; the sequence is VPERPSRRKTS. Thr18 carries the phosphothreonine modification. Ser36 is subject to Phosphoserine. At Thr58 the chain carries Phosphothreonine. Ser70 is subject to Phosphoserine. Thr85 carries the phosphothreonine modification. Residues 86–95 show a composition bias toward polar residues; that stretch reads EELNNVMNNT. Residue Ser104 is modified to Phosphoserine. 2 disordered regions span residues 107-522 and 548-679; these read SKHN…EKIE and LMDT…FHSL. Positions 109 to 119 are enriched in basic residues; it reads HNIHSVSRKKS. Polar residues-rich tracts occupy residues 133 to 149 and 164 to 178; these read QNGQ…TNPS and SAIS…SNNE. Basic and acidic residues predominate over residues 179–213; the sequence is VTEHSDSEDLTEKQKVHAALDNEAGDGSHFEEKLI. Phosphoserine is present on residues Ser183, Ser206, and Ser231. Residues 243-272 show a composition bias toward basic and acidic residues; sequence SDDKAEKFTKHPESSLEELQKHQEQQEEKI. Position 277 is a phosphothreonine (Thr277). The residue at position 284 (Ser284) is a Phosphoserine. The span at 296–323 shows a compositional bias: polar residues; it reads EVNSQPQGPSDTETVIAATSSNVPSQIA. Ser324 carries the post-translational modification Phosphoserine. Composition is skewed to basic and acidic residues over residues 339–351 and 372–383; these read KKDF…KEEL and EESKIPKIPSER. The segment at 383–396 is interaction with SH3 domain of ABP1; the sequence is RPKRRAPPPVPKKP. 2 stretches are compositionally biased toward polar residues: residues 414-427 and 437-452; these read DLHN…TTAS and SSIT…TSKL. Residues 471 to 482 show a composition bias toward basic and acidic residues; sequence LEKKLSSPDTES. Residues 483–492 show a composition bias toward polar residues; it reads KLGTQDQSQA. A compositionally biased stretch (basic residues) spans 501–512; it reads RRGRGPRGRKLP. Position 552 is a phosphothreonine (Thr552). The span at 556 to 576 shows a compositional bias: basic and acidic residues; the sequence is QAERALDEKSKSIPEEQREQS. The residue at position 576 (Ser576) is a Phosphoserine. Polar residues predominate over residues 603–613; sequence PLSQLPQTNAV. Residues Ser620, Ser623, Ser625, Ser627, Ser667, Ser671, Ser675, and Ser678 each carry the phosphoserine modification. Positions 667 to 679 are enriched in basic and acidic residues; sequence SALHSEEASFHSL.

This sequence belongs to the AIM21 family. In terms of assembly, interacts with ribosomes. Interacts with ABP1.

The protein localises to the cytoplasm. Its subcellular location is the cytoskeleton. It is found in the actin patch. Functionally, involved in mitochondrial migration along actin filaments. This is Altered inheritance of mitochondria protein 21 (AIM21) from Saccharomyces cerevisiae (strain YJM789) (Baker's yeast).